The chain runs to 976 residues: R3H domain-containing protein 2 (976 aa).

2 disordered regions span residues 32 to 71 and 105 to 147; these read ISKT…AKSN and ISCP…QEYT. Over residues 36 to 56 the composition is skewed to basic and acidic residues; that stretch reads PSKEEIEKECEDTSLRQETQR. Ser-37 carries the post-translational modification Phosphoserine. The span at 58-71 shows a compositional bias: basic residues; it reads TSNHGHARKRAKSN. The segment covering 109–143 has biased composition (basic and acidic residues); the sequence is SDKEEEKSTKDVSEKEDKDKNKEKIPRKMLSRDSS. Ser-143 bears the Phosphoserine mark. The R3H domain occupies 169–232; sequence RMMLLKLEQE…AVIINKTSNT (64 aa). The SUZ domain occupies 233-310; sequence RIPEQRFSEH…NREGLSRTSS (78 aa). The span at 257–269 shows a compositional bias: basic and acidic residues; the sequence is LKRDDASMDRDDN. Disordered stretches follow at residues 257 to 376, 401 to 457, 480 to 560, 661 to 725, and 738 to 780; these read LKRD…ISRP, CTAQ…EAAD, ASTG…PGLQ, GTSP…PSMV, and RGQK…SLSS. Residues 306–317 show a composition bias toward low complexity; that stretch reads SRTSSSRQSSTD. Ser-330, Ser-333, and Ser-349 each carry phosphoserine. The segment covering 401-415 has biased composition (low complexity); it reads CTAQQQQQQQQQQLP. Composition is skewed to polar residues over residues 441–453 and 480–504; these read PFGQ…QGST and ASTG…QQVL. Residues 543 to 560 show a composition bias toward low complexity; that stretch reads SPQRGQQLPQPSQQPGLQ. Positions 682–691 are enriched in pro residues; that stretch reads SPSPCSPPQM. Residues 692–714 are compositionally biased toward low complexity; it reads PQQYSGVSPSGPGVVVMQLNVPN. Over residues 748-758 the composition is skewed to polar residues; that stretch reads PDSSPQANTQM. Positions 759–777 are enriched in low complexity; that stretch reads SSSPVTSPTQSPAPSPVTS. A phosphoserine mark is found at Ser-853 and Ser-855. Phosphothreonine occurs at positions 856 and 860.

The protein resides in the nucleus. The sequence is that of R3H domain-containing protein 2 (R3HDM2) from Homo sapiens (Human).